The chain runs to 226 residues: X-linked lymphocyte-regulated protein 3C (226 aa).

The interval 1–66 is disordered; that stretch reads MSSRKRKATD…QARKEKQDLV (66 aa). Positions 8-18 are enriched in basic and acidic residues; that stretch reads ATDTAGRHSRM. Polar residues predominate over residues 21-30; that stretch reads NLSSDDSQNP. Basic and acidic residues-rich tracts occupy residues 39–48 and 56–66; these read EVLDAGREDI and QQARKEKQDLV. Residues 155 to 210 adopt a coiled-coil conformation; the sequence is ESLTLQKNRMEEFKSLCEKYLEKLEVLRDSRGNSIAEELRRLIATLEIKLLMLHNQ.

Belongs to the XLR/SYCP3 family. In terms of tissue distribution, expressed in lymphoid cells.

This chain is X-linked lymphocyte-regulated protein 3C (Xlr3c), found in Mus musculus (Mouse).